A 650-amino-acid chain; its full sequence is Acetyl-coenzyme A synthetase (650 aa).

Residues 191–194 (RGGR), Thr311, and Asn335 contribute to the CoA site. ATP is bound by residues 387 to 389 (GEP), 411 to 416 (DTWWQT), Asp500, and Arg515. CoA is bound at residue Ser523. Arg526 is a binding site for ATP. Val537, His539, and Val542 together coordinate Mg(2+). Residue Arg584 participates in CoA binding. N6-acetyllysine is present on Lys609.

Belongs to the ATP-dependent AMP-binding enzyme family. The cofactor is Mg(2+). Post-translationally, acetylated. Deacetylation by the SIR2-homolog deacetylase activates the enzyme.

The enzyme catalyses acetate + ATP + CoA = acetyl-CoA + AMP + diphosphate. In terms of biological role, catalyzes the conversion of acetate into acetyl-CoA (AcCoA), an essential intermediate at the junction of anabolic and catabolic pathways. AcsA undergoes a two-step reaction. In the first half reaction, AcsA combines acetate with ATP to form acetyl-adenylate (AcAMP) intermediate. In the second half reaction, it can then transfer the acetyl group from AcAMP to the sulfhydryl group of CoA, forming the product AcCoA. The polypeptide is Acetyl-coenzyme A synthetase (Shewanella sp. (strain MR-7)).